Here is a 121-residue protein sequence, read N- to C-terminus: Large ribosomal subunit protein uL18 (121 aa).

Belongs to the universal ribosomal protein uL18 family. As to quaternary structure, part of the 50S ribosomal subunit; part of the 5S rRNA/L5/L18/L25 subcomplex. Contacts the 5S and 23S rRNAs.

In terms of biological role, this is one of the proteins that bind and probably mediate the attachment of the 5S RNA into the large ribosomal subunit, where it forms part of the central protuberance. This chain is Large ribosomal subunit protein uL18, found in Streptococcus suis (strain 98HAH33).